Here is a 536-residue protein sequence, read N- to C-terminus: Putative UDP-glucuronosyltransferase ugt-47 (536 aa).

Positions 1–21 (MFRYHSILLLAILYFFEYGLA) are cleaved as a signal peptide. 2 N-linked (GlcNAc...) asparagine glycosylation sites follow: Asn-52 and Asn-308. Residues 497 to 517 (IIVPCFFVAFYFIIFPFFKLF) form a helical membrane-spanning segment.

This sequence belongs to the UDP-glycosyltransferase family.

The protein resides in the membrane. The catalysed reaction is glucuronate acceptor + UDP-alpha-D-glucuronate = acceptor beta-D-glucuronoside + UDP + H(+). This Caenorhabditis elegans protein is Putative UDP-glucuronosyltransferase ugt-47 (ugt-47).